The sequence spans 377 residues: Glutamate 5-kinase (377 aa).

An ATP-binding site is contributed by K22. The substrate site is built by S62, D149, and N161. ATP contacts are provided by residues 181–182 and 223–229; these read TD and TGGMVTK. Residues 285–363 form the PUA domain; the sequence is RGAIVVDAGA…AQLKRFLGPQ (79 aa).

Belongs to the glutamate 5-kinase family.

The protein resides in the cytoplasm. The enzyme catalyses L-glutamate + ATP = L-glutamyl 5-phosphate + ADP. It participates in amino-acid biosynthesis; L-proline biosynthesis; L-glutamate 5-semialdehyde from L-glutamate: step 1/2. Functionally, catalyzes the transfer of a phosphate group to glutamate to form L-glutamate 5-phosphate. In Bifidobacterium longum subsp. infantis (strain ATCC 15697 / DSM 20088 / JCM 1222 / NCTC 11817 / S12), this protein is Glutamate 5-kinase.